Reading from the N-terminus, the 543-residue chain is Glucose-6-phosphate isomerase (543 aa).

Glu351 serves as the catalytic Proton donor. Active-site residues include His382 and Lys511.

It belongs to the GPI family.

It is found in the cytoplasm. The enzyme catalyses alpha-D-glucose 6-phosphate = beta-D-fructose 6-phosphate. It functions in the pathway carbohydrate biosynthesis; gluconeogenesis. It participates in carbohydrate degradation; glycolysis; D-glyceraldehyde 3-phosphate and glycerone phosphate from D-glucose: step 2/4. Its function is as follows. Catalyzes the reversible isomerization of glucose-6-phosphate to fructose-6-phosphate. This Hydrogenovibrio crunogenus (strain DSM 25203 / XCL-2) (Thiomicrospira crunogena) protein is Glucose-6-phosphate isomerase.